The following is a 313-amino-acid chain: Ribosomal protein L11 methyltransferase (313 aa).

S-adenosyl-L-methionine is bound by residues T161, G182, D204, and N247.

It belongs to the methyltransferase superfamily. PrmA family.

It is found in the cytoplasm. It carries out the reaction L-lysyl-[protein] + 3 S-adenosyl-L-methionine = N(6),N(6),N(6)-trimethyl-L-lysyl-[protein] + 3 S-adenosyl-L-homocysteine + 3 H(+). Its function is as follows. Methylates ribosomal protein L11. The sequence is that of Ribosomal protein L11 methyltransferase from Halalkalibacterium halodurans (strain ATCC BAA-125 / DSM 18197 / FERM 7344 / JCM 9153 / C-125) (Bacillus halodurans).